Reading from the N-terminus, the 429-residue chain is Enolase (429 aa).

(2R)-2-phosphoglycerate is bound at residue glutamine 162. Glutamate 204 acts as the Proton donor in catalysis. 3 residues coordinate Mg(2+): aspartate 241, glutamate 282, and aspartate 309. Positions 334, 363, 364, and 385 each coordinate (2R)-2-phosphoglycerate. Catalysis depends on lysine 334, which acts as the Proton acceptor.

It belongs to the enolase family. Requires Mg(2+) as cofactor.

The protein resides in the cytoplasm. Its subcellular location is the secreted. It is found in the cell surface. It catalyses the reaction (2R)-2-phosphoglycerate = phosphoenolpyruvate + H2O. Its pathway is carbohydrate degradation; glycolysis; pyruvate from D-glyceraldehyde 3-phosphate: step 4/5. Its function is as follows. Catalyzes the reversible conversion of 2-phosphoglycerate (2-PG) into phosphoenolpyruvate (PEP). It is essential for the degradation of carbohydrates via glycolysis. The protein is Enolase of Acidothermus cellulolyticus (strain ATCC 43068 / DSM 8971 / 11B).